The primary structure comprises 282 residues: Biotin synthase (282 aa).

A Radical SAM core domain is found at 1–228 (MQEIFLCSIS…NARLMVAGGR (228 aa)). Positions 17, 21, and 24 each coordinate [4Fe-4S] cluster. C61, C96, C154, and R221 together coordinate [2Fe-2S] cluster.

The protein belongs to the radical SAM superfamily. Biotin synthase family. Homodimer. [4Fe-4S] cluster is required as a cofactor. [2Fe-2S] cluster serves as cofactor.

It carries out the reaction (4R,5S)-dethiobiotin + (sulfur carrier)-SH + 2 reduced [2Fe-2S]-[ferredoxin] + 2 S-adenosyl-L-methionine = (sulfur carrier)-H + biotin + 2 5'-deoxyadenosine + 2 L-methionine + 2 oxidized [2Fe-2S]-[ferredoxin]. The protein operates within cofactor biosynthesis; biotin biosynthesis; biotin from 7,8-diaminononanoate: step 2/2. Its function is as follows. Catalyzes the conversion of dethiobiotin (DTB) to biotin by the insertion of a sulfur atom into dethiobiotin via a radical-based mechanism. In Helicobacter pylori (strain J99 / ATCC 700824) (Campylobacter pylori J99), this protein is Biotin synthase.